The primary structure comprises 436 residues: Adenylosuccinate synthetase (436 aa).

Residues 12 to 18 (GDEGKGK) and 40 to 42 (GHT) each bind GTP. Residue Asp-13 is the Proton acceptor of the active site. Mg(2+) is bound by residues Asp-13 and Gly-40. IMP contacts are provided by residues 13-16 (DEGK), 38-41 (NAGH), Thr-128, Arg-142, Gln-223, Thr-238, and Arg-302. Residue His-41 is the Proton donor of the active site. 298-304 (TTTGRRR) contacts substrate. Residues Arg-304, 330 to 332 (KLD), and 412 to 414 (SLG) each bind GTP.

The protein belongs to the adenylosuccinate synthetase family. In terms of assembly, homodimer. It depends on Mg(2+) as a cofactor.

Its subcellular location is the cytoplasm. It carries out the reaction IMP + L-aspartate + GTP = N(6)-(1,2-dicarboxyethyl)-AMP + GDP + phosphate + 2 H(+). It functions in the pathway purine metabolism; AMP biosynthesis via de novo pathway; AMP from IMP: step 1/2. In terms of biological role, plays an important role in the de novo pathway of purine nucleotide biosynthesis. Catalyzes the first committed step in the biosynthesis of AMP from IMP. In Prochlorococcus marinus (strain MIT 9515), this protein is Adenylosuccinate synthetase.